Consider the following 817-residue polypeptide: U3 small nucleolar RNA-associated protein 13 (817 aa).

WD repeat units lie at residues 59–100 (EDEQ…RSMK), 102–139 (SSPSYILDADSTSTLLAVGGTDGSIIVVDIENGYITHS), 142–187 (GHGG…HTLQ), 191–233 (SAVR…KCKL), 238–280 (PVNQ…VLKR), 386–425 (GHEDLLNSLDATEDGLWIATASKDNTAIVWRYNENSCKFD), 432–476 (GHSA…ASMD), 489–528 (AHEKDINALSVSPNDSIFATASYDKTCKIWNLENGELEAT), 531–572 (NHKR…KTLE), 573–614 (GHTN…KTLD), 616–654 (HNNRLWALSTMNDGDMIVSADADGVFQFWKDCTEQEIEE), and 664–705 (EQEQ…LGES).

As to quaternary structure, interacts with snoRNA U3. Interacts with MPP10. Component of the ribosomal small subunit (SSU) processome composed of at least 40 protein subunits and snoRNA U3.

The protein resides in the nucleus. It localises to the nucleolus. Its function is as follows. Involved in nucleolar processing of pre-18S ribosomal RNA. The chain is U3 small nucleolar RNA-associated protein 13 (UTP13) from Saccharomyces cerevisiae (strain ATCC 204508 / S288c) (Baker's yeast).